Reading from the N-terminus, the 989-residue chain is Phosphoenolpyruvate carboxylase (989 aa).

Catalysis depends on residues His175 and Lys630.

Belongs to the PEPCase type 1 family. The cofactor is Mg(2+).

The enzyme catalyses oxaloacetate + phosphate = phosphoenolpyruvate + hydrogencarbonate. In terms of biological role, forms oxaloacetate, a four-carbon dicarboxylic acid source for the tricarboxylic acid cycle. The protein is Phosphoenolpyruvate carboxylase of Prochlorococcus marinus subsp. pastoris (strain CCMP1986 / NIES-2087 / MED4).